A 141-amino-acid chain; its full sequence is Regulator of ribonuclease activity B (141 aa).

A disordered region spans residues 112 to 141 (GTYFEDPNAPDDEDDNDDLFPPEEDEPRLH). Residues 119-141 (NAPDDEDDNDDLFPPEEDEPRLH) show a composition bias toward acidic residues.

It belongs to the RraB family. As to quaternary structure, interacts with the C-terminal region of Rne.

The protein resides in the cytoplasm. In terms of biological role, globally modulates RNA abundance by binding to RNase E (Rne) and regulating its endonucleolytic activity. Can modulate Rne action in a substrate-dependent manner by altering the composition of the degradosome. The protein is Regulator of ribonuclease activity B of Xenorhabdus nematophila (strain ATCC 19061 / DSM 3370 / CCUG 14189 / LMG 1036 / NCIMB 9965 / AN6).